A 122-amino-acid chain; its full sequence is Large ribosomal subunit protein uL14 (122 aa).

Belongs to the universal ribosomal protein uL14 family. Part of the 50S ribosomal subunit. Forms a cluster with proteins L3 and L19. In the 70S ribosome, L14 and L19 interact and together make contacts with the 16S rRNA in bridges B5 and B8.

In terms of biological role, binds to 23S rRNA. Forms part of two intersubunit bridges in the 70S ribosome. The polypeptide is Large ribosomal subunit protein uL14 (Chlamydia trachomatis serovar L2 (strain ATCC VR-902B / DSM 19102 / 434/Bu)).